The chain runs to 571 residues: MRTSQYLFSTLKETPAEASIVSHQLMLRAGMIRPLASGLYTWLPTGLRVLNKVEKIIREEMDKSGALEVKMAVTQPAELWQESGRWEEYGPELLRFKDRGERDFVIGPTNEEVITDLVRRELSSYKQLPLNLYHIQTKFRDEVRPRFGVMRSREFVMKDAYSFHTTHECLQKTYDVMYETYSNIFNRLGLDFRAVQADTGSIGGSASHEFQVLAQSGEDDVVFSTESDFAANIELAEAVALGERGAATEELRVVDTPNAKTIAELVEQFNQPIEKTVKTLVVHATEESGHKLVALLVRGDHELNEIKAEKVDIVASPLQFATDEEIRAVVGAGTGSLGPINLPMPIVIDRTVANMDNFSAGANQDGKHYFGINWERDLPVPHIADLRNVVEGDPSPDGKGVLQIKRGIEVGHIFQLGTKYSAAMNATVQGEDGRPQTMIMGCYGIGVTRVIAAAIEQHHDERGIIWPDNIAPFKVAIVPMNMHKSESVQQFAEELYRTLTAQGVEVIFDDRKERPGVMFADMELIGVPHMIVIGEKNLEKGEIEYKYRRSGEKEMIAKDQLLDVLKAKFAS.

The protein belongs to the class-II aminoacyl-tRNA synthetase family. ProS type 1 subfamily. Homodimer.

The protein resides in the cytoplasm. It carries out the reaction tRNA(Pro) + L-proline + ATP = L-prolyl-tRNA(Pro) + AMP + diphosphate. Its function is as follows. Catalyzes the attachment of proline to tRNA(Pro) in a two-step reaction: proline is first activated by ATP to form Pro-AMP and then transferred to the acceptor end of tRNA(Pro). As ProRS can inadvertently accommodate and process non-cognate amino acids such as alanine and cysteine, to avoid such errors it has two additional distinct editing activities against alanine. One activity is designated as 'pretransfer' editing and involves the tRNA(Pro)-independent hydrolysis of activated Ala-AMP. The other activity is designated 'posttransfer' editing and involves deacylation of mischarged Ala-tRNA(Pro). The misacylated Cys-tRNA(Pro) is not edited by ProRS. The chain is Proline--tRNA ligase from Pasteurella multocida (strain Pm70).